Here is a 444-residue protein sequence, read N- to C-terminus: Tubulin beta chain (444 aa).

The MREI motif motif lies at 1 to 4 (MREI). Residue Gln11 participates in GTP binding. Ser40 carries the phosphoserine modification. Thr55 is modified (phosphothreonine). Lys58 carries the post-translational modification N6-acetyllysine; alternate. Position 58 is an N6-succinyllysine; alternate (Lys58). Lys58 participates in a covalent cross-link: Glycyl lysine isopeptide (Lys-Gly) (interchain with G-Cter in ubiquitin); alternate. GTP contacts are provided by Glu69, Ser138, Gly142, Thr143, and Gly144. Position 69 (Glu69) interacts with Mg(2+). Position 172 is a phosphoserine; by CDK1 (Ser172). The GTP site is built by Asn204 and Asn226. Phosphothreonine is present on residues Thr285 and Thr290. Position 318 is an omega-N-methylarginine (Arg318). Residue Lys324 forms a Glycyl lysine isopeptide (Lys-Gly) (interchain with G-Cter in ubiquitin) linkage. The interval 423–444 (QQYQDATAEEEEDFGEEAEEEA) is disordered. Positions 429-444 (TAEEEEDFGEEAEEEA) are enriched in acidic residues. 5-glutamyl polyglutamate is present on residues Glu434, Glu438, Glu439, and Glu441. 5 positions are modified to 5-glutamyl glycine: Glu438, Glu439, Glu441, Glu442, and Glu443.

It belongs to the tubulin family. As to quaternary structure, heterodimer of alpha and beta chains. A typical microtubule is a hollow water-filled tube with an outer diameter of 25 nm and an inner diameter of 15 nM. Alpha-beta heterodimers associate head-to-tail to form protofilaments running lengthwise along the microtubule wall with the beta-tubulin subunit facing the microtubule plus end conferring a structural polarity. Microtubules usually have 13 protofilaments but different protofilament numbers can be found in some organisms and specialized cells. Interacts with CIMAP3. Interacts with DIAPH1. Interacts with MX1. May interact with RNABP10. Interacts with CFAP157. Nascent tubulin polypeptide interacts (via beta-tubulin MREI motif) with TTC5/STRAP; this interaction results in tubulin mRNA-targeted degradation. The cofactor is Mg(2+). In terms of processing, some glutamate residues at the C-terminus are polyglycylated, resulting in polyglycine chains on the gamma-carboxyl group. Glycylation is mainly limited to tubulin incorporated into axonemes (cilia and flagella) whereas glutamylation is prevalent in neuronal cells, centrioles, axonemes, and the mitotic spindle. Both modifications can coexist on the same protein on adjacent residues, and lowering polyglycylation levels increases polyglutamylation, and reciprocally. Cilia and flagella glycylation is required for their stability and maintenance. Flagella glycylation controls sperm motility. Some glutamate residues at the C-terminus are polyglutamylated, resulting in polyglutamate chains on the gamma-carboxyl group. Polyglutamylation plays a key role in microtubule severing by spastin (SPAST). SPAST preferentially recognizes and acts on microtubules decorated with short polyglutamate tails: severing activity by SPAST increases as the number of glutamates per tubulin rises from one to eight, but decreases beyond this glutamylation threshold. Glutamylation is also involved in cilia motility. Post-translationally, phosphorylated on Ser-172 by CDK1 during the cell cycle, from metaphase to telophase, but not in interphase. This phosphorylation inhibits tubulin incorporation into microtubules.

The protein resides in the cytoplasm. It localises to the cytoskeleton. In terms of biological role, tubulin is the major constituent of microtubules, a cylinder consisting of laterally associated linear protofilaments composed of alpha- and beta-tubulin heterodimers. Microtubules grow by the addition of GTP-tubulin dimers to the microtubule end, where a stabilizing cap forms. Below the cap, tubulin dimers are in GDP-bound state, owing to GTPase activity of alpha-tubulin. In Sus scrofa (Pig), this protein is Tubulin beta chain (TUBB).